We begin with the raw amino-acid sequence, 374 residues long: DNA integrity scanning protein DisA (374 aa).

The 139-residue stretch at 20–158 (DGLMRASLSA…DGQRRVLEDS (139 aa)) folds into the DAC domain. Residues glycine 87, leucine 105, and 118 to 122 (TRHRT) contribute to the ATP site.

The protein belongs to the DisA family. In terms of assembly, homooctamer. Interacts with RadA. Requires Mg(2+) as cofactor.

The catalysed reaction is 2 ATP = 3',3'-c-di-AMP + 2 diphosphate. With respect to regulation, diadenylate cyclase activity is inhibited by the interaction with RadA. Participates in a DNA-damage check-point that is active prior to asymmetric division when DNA is damaged. DisA forms globular foci that rapidly scan along the chromosomes during sporulation, searching for lesions. When a lesion is present, DisA pauses at the lesion site. This triggers a cellular response that culminates in a temporary block in sporulation initiation. Functionally, also has diadenylate cyclase activity, catalyzing the condensation of 2 ATP molecules into cyclic di-AMP (c-di-AMP). c-di-AMP acts as a signaling molecule that couples DNA integrity with progression of sporulation. The rise in c-di-AMP level generated by DisA while scanning the chromosome, operates as a positive signal that advances sporulation; upon encountering a lesion, the DisA focus arrests at the damaged site and halts c-di-AMP synthesis. The chain is DNA integrity scanning protein DisA from Streptomyces coelicolor (strain ATCC BAA-471 / A3(2) / M145).